Consider the following 296-residue polypeptide: Ribose import binding protein RbsB (296 aa).

A signal peptide spans 1–25 (MNMKKLATLVSAVALSATVSANAMA).

The protein belongs to the bacterial solute-binding protein 2 family. In terms of assembly, the complex is composed of an ATP-binding protein (RbsA), two transmembrane proteins (RbsC) and a solute-binding protein (RbsB).

It localises to the periplasm. Part of the ABC transporter complex RbsABC involved in ribose import. Binds ribose. Also serves as the primary chemoreceptor for chemotaxis. The chain is Ribose import binding protein RbsB from Escherichia coli (strain K12).